The primary structure comprises 480 residues: Na(+)/H(+) antiporter NhaA (480 aa).

11 helical membrane-spanning segments follow: residues 34-54, 76-96, 113-133, 144-164, 174-194, 197-217, 223-243, 282-302, 312-332, 350-370, and 381-401; these read VGGV…NIPA, LSVA…VAGI, AVLP…VYTL, GWAV…AVIG, FLLT…AIFF, RINF…WLLL, GWYV…NSGV, GLAV…GGAL, LGVV…STWL, IFAV…IGEL, and EVKA…TVLL. Residues 454-480 form a disordered region; it reads AAEKAAAARHGGAEVPGGAGEEDGRPA.

This sequence belongs to the NhaA Na(+)/H(+) (TC 2.A.33) antiporter family.

The protein localises to the cell membrane. The enzyme catalyses Na(+)(in) + 2 H(+)(out) = Na(+)(out) + 2 H(+)(in). Its function is as follows. Na(+)/H(+) antiporter that extrudes sodium in exchange for external protons. This Streptomyces antibioticus protein is Na(+)/H(+) antiporter NhaA.